Reading from the N-terminus, the 192-residue chain is Ion-translocating oxidoreductase complex subunit A (192 aa).

6 consecutive transmembrane segments (helical) span residues Leu5–Leu25, Ile39–Val59, Leu65–Val85, Ala102–Leu122, Ala134–Met154, and Ala171–Val191.

Belongs to the NqrDE/RnfAE family. The complex is composed of six subunits: RnfA, RnfB, RnfC, RnfD, RnfE and RnfG.

It is found in the cell inner membrane. Functionally, part of a membrane-bound complex that couples electron transfer with translocation of ions across the membrane. This chain is Ion-translocating oxidoreductase complex subunit A, found in Shewanella sp. (strain MR-4).